The primary structure comprises 129 residues: MSNVPAELKYSKEHEWLRKEADGTYTVGITEHAQELLGDMVFVDLPEVGATVSAGDDCAVAESVKAASDIYAPVSGEIVAVNDALSDSPELVNSEPYAGGWIFKIKASDESELESLLDATAYEALLEDE.

The 83-residue stretch at 24-106 (TYTVGITEHA…YAGGWIFKIK (83 aa)) folds into the Lipoyl-binding domain. N6-lipoyllysine is present on Lys65.

The protein belongs to the GcvH family. The glycine cleavage system is composed of four proteins: P, T, L and H. It depends on (R)-lipoate as a cofactor.

Its function is as follows. The glycine cleavage system catalyzes the degradation of glycine. The H protein shuttles the methylamine group of glycine from the P protein to the T protein. The protein is Glycine cleavage system H protein of Escherichia fergusonii (strain ATCC 35469 / DSM 13698 / CCUG 18766 / IAM 14443 / JCM 21226 / LMG 7866 / NBRC 102419 / NCTC 12128 / CDC 0568-73).